Reading from the N-terminus, the 224-residue chain is BOS complex subunit TMEM147 (224 aa).

Residues 1–21 (MTLFHFGNCFALAYFPYFITY) form a helical membrane-spanning segment. Residues 22 to 34 (KCSGLSEYNAFWK) are Cytoplasmic-facing. The helical transmembrane segment at 35 to 58 (CVQAGVTYLFVQLCKMLFLATFFP) threads the bilayer. The Lumenal segment spans residues 59-66 (TWEGGIYD). The chain crosses the membrane as a helical span at residues 67–88 (FIGEFMKASVDVADLIGLNLVM). Residues 89-98 (SRNAGKGEYK) are Cytoplasmic-facing. The chain crosses the membrane as a helical span at residues 99 to 124 (IMVAALGWATAELIMSRCIPLWVGAR). The Lumenal segment spans residues 125–129 (GIEFD). A helical membrane pass occupies residues 130 to 155 (WKYIQMSIDSNISLVHYIVASAQVWM). Topologically, residues 156–164 (ITRYDLYHT) are cytoplasmic. The helical transmembrane segment at 165-187 (FRPAVLLLMFLSVYKAFVMETFV) threads the bilayer. At 188 to 194 (HLCSLGS) the chain is on the lumenal side. The chain crosses the membrane as a helical span at residues 195–216 (WTALLARAVVTGLLALSTLALY). Topologically, residues 217–224 (VAVVNVHS) are cytoplasmic.

This sequence belongs to the TMEM147 family. Component of the back of Sec61 (BOS) complex, composed of NCLN/Nicalin, NOMO1 and TMEM147. The BOS complex is part of the multi-pass translocon (MPT) complex, composed of three subcomplexes, the GEL complex (composed of RAB5IF/OPTI and TMCO1), the BOS complex (composed of NCLN/Nicalin, NOMO1 and TMEM147) and the PAT complex (composed of WDR83OS/Asterix and CCDC47). The MPT complex associates with the SEC61 complex. Interacts with CHRM3, CHRM1 and AVPR2. Interacts with LBR; promoting LBR localization to the nucleus inner membrane. Interacts with DHCR7.

The protein localises to the endoplasmic reticulum membrane. It localises to the nucleus membrane. Its subcellular location is the cell membrane. In terms of biological role, component of the multi-pass translocon (MPT) complex that mediates insertion of multi-pass membrane proteins into the lipid bilayer of membranes. The MPT complex takes over after the SEC61 complex: following membrane insertion of the first few transmembrane segments of proteins by the SEC61 complex, the MPT complex occludes the lateral gate of the SEC61 complex to promote insertion of subsequent transmembrane regions. Also acts as a negative regulator of CHRM3 function, most likely by interfering with its trafficking to the cell membrane. Negatively regulates CHRM3-mediated calcium mobilization and activation of RPS6KA1/p90RSK activity. Regulates LBR localization to the nucleus inner membrane. In Canis lupus familiaris (Dog), this protein is BOS complex subunit TMEM147.